The chain runs to 511 residues: Inositol-3-phosphate synthase (511 aa).

Positions 70, 71, 72, 143, 179, 180, 190, 193, 230, 231, 232, 233, 281, 282, 306, 309, 340, 341, 342, 355, 393, 394, 422, and 423 each coordinate NAD(+).

It belongs to the myo-inositol 1-phosphate synthase family. Requires NAD(+) as cofactor.

The protein resides in the cytoplasm. It carries out the reaction D-glucose 6-phosphate = 1D-myo-inositol 3-phosphate. It participates in polyol metabolism; myo-inositol biosynthesis; myo-inositol from D-glucose 6-phosphate: step 1/2. Functionally, key enzyme in myo-inositol biosynthesis pathway that catalyzes the conversion of glucose 6-phosphate to 1-myo-inositol 1-phosphate in a NAD-dependent manner. Rate-limiting enzyme in the synthesis of all inositol-containing compounds. This is Inositol-3-phosphate synthase (ino1) from Dictyostelium discoideum (Social amoeba).